Consider the following 212-residue polypeptide: Phosphoribosylglycinamide formyltransferase (212 aa).

Residue 11-13 (GSN) participates in N(1)-(5-phospho-beta-D-ribosyl)glycinamide binding. (6R)-10-formyltetrahydrofolate contacts are provided by residues Arg64, 89 to 92 (MRIL), and Asn106. His108 serves as the catalytic Proton donor. 140-144 (TDELD) provides a ligand contact to (6R)-10-formyltetrahydrofolate. 170-173 (QTQE) is a binding site for N(1)-(5-phospho-beta-D-ribosyl)glycinamide.

This sequence belongs to the GART family. In terms of assembly, monomer. Homodimer below pH 6.8.

The catalysed reaction is N(1)-(5-phospho-beta-D-ribosyl)glycinamide + (6R)-10-formyltetrahydrofolate = N(2)-formyl-N(1)-(5-phospho-beta-D-ribosyl)glycinamide + (6S)-5,6,7,8-tetrahydrofolate + H(+). Its pathway is purine metabolism; IMP biosynthesis via de novo pathway; N(2)-formyl-N(1)-(5-phospho-D-ribosyl)glycinamide from N(1)-(5-phospho-D-ribosyl)glycinamide (10-formyl THF route): step 1/1. Inhibited by N10-(bromoacetyl)-5,8-dideazafolate. Catalyzes the transfer of a formyl group from 10-formyltetrahydrofolate to 5-phospho-ribosyl-glycinamide (GAR), producing 5-phospho-ribosyl-N-formylglycinamide (FGAR) and tetrahydrofolate. The protein is Phosphoribosylglycinamide formyltransferase of Escherichia coli (strain K12).